Reading from the N-terminus, the 964-residue chain is Translation initiation factor IF-2 (964 aa).

Over residues 1–10 (MSDKTNDDKT) the composition is skewed to basic and acidic residues. The disordered stretch occupies residues 1 to 379 (MSDKTNDDKT…SQMQETREKI (379 aa)). Residues 27 to 37 (EQSTVRQNFSH) show a composition bias toward polar residues. Low complexity predominate over residues 77–102 (APAASTPAPAQAAQPAQAAPVVRAPA). Residues 103 to 113 (PATPAPKPAAP) show a composition bias toward pro residues. The span at 114 to 140 (AAPVTKPHVAQQRPAQQRPGGQQAQRP) shows a compositional bias: low complexity. 2 stretches are compositionally biased toward basic and acidic residues: residues 156 to 227 (SEMD…EAAK) and 234 to 243 (ARTERRDDAR). Positions 250–278 (RPQQAGRPQGNRPPQGGRPQQGGPRPAAP) are enriched in low complexity. The span at 323-338 (PEVRAPKVVKTEDDRR) shows a compositional bias: basic and acidic residues. One can recognise a tr-type G domain in the interval 462 to 629 (SRPPVVTIMG…AILLQAEILD (168 aa)). Positions 471 to 478 (GHVDHGKT) are G1. 471 to 478 (GHVDHGKT) contributes to the GTP binding site. The tract at residues 496–500 (GITQH) is G2. The tract at residues 517-520 (DTPG) is G3. GTP contacts are provided by residues 517–521 (DTPGH) and 571–574 (NKID). Residues 571-574 (NKID) form a G4 region. The tract at residues 607 to 609 (SAK) is G5.

This sequence belongs to the TRAFAC class translation factor GTPase superfamily. Classic translation factor GTPase family. IF-2 subfamily.

Its subcellular location is the cytoplasm. Functionally, one of the essential components for the initiation of protein synthesis. Protects formylmethionyl-tRNA from spontaneous hydrolysis and promotes its binding to the 30S ribosomal subunits. Also involved in the hydrolysis of GTP during the formation of the 70S ribosomal complex. The sequence is that of Translation initiation factor IF-2 from Brucella anthropi (strain ATCC 49188 / DSM 6882 / CCUG 24695 / JCM 21032 / LMG 3331 / NBRC 15819 / NCTC 12168 / Alc 37) (Ochrobactrum anthropi).